Consider the following 132-residue polypeptide: Small ribosomal subunit protein uS8 (132 aa).

It belongs to the universal ribosomal protein uS8 family. In terms of assembly, part of the 30S ribosomal subunit. Contacts proteins S5 and S12.

Its function is as follows. One of the primary rRNA binding proteins, it binds directly to 16S rRNA central domain where it helps coordinate assembly of the platform of the 30S subunit. The polypeptide is Small ribosomal subunit protein uS8 (Corynebacterium diphtheriae (strain ATCC 700971 / NCTC 13129 / Biotype gravis)).